Here is a 389-residue protein sequence, read N- to C-terminus: Ribosomal RNA large subunit methyltransferase M (389 aa).

A compositionally biased stretch (polar residues) spans 1-13; the sequence is MIGNARMSQKYPT. The interval 1–24 is disordered; the sequence is MIGNARMSQKYPTSSSRKRSPLSS. Residues S214, 247 to 250, D266, D286, and D302 each bind S-adenosyl-L-methionine; that span reads APGG. Residue K331 is the Proton acceptor of the active site.

It belongs to the class I-like SAM-binding methyltransferase superfamily. RNA methyltransferase RlmE family. RlmM subfamily. As to quaternary structure, monomer.

It is found in the cytoplasm. The enzyme catalyses cytidine(2498) in 23S rRNA + S-adenosyl-L-methionine = 2'-O-methylcytidine(2498) in 23S rRNA + S-adenosyl-L-homocysteine + H(+). Catalyzes the 2'-O-methylation at nucleotide C2498 in 23S rRNA. The sequence is that of Ribosomal RNA large subunit methyltransferase M from Hahella chejuensis (strain KCTC 2396).